We begin with the raw amino-acid sequence, 338 residues long: L-serine dehydratase (338 aa).

Position 39 is an N6-(pyridoxal phosphate)lysine (Lys39).

It belongs to the serine/threonine dehydratase family. The cofactor is pyridoxal 5'-phosphate.

It localises to the cytoplasm. The catalysed reaction is L-serine = pyruvate + NH4(+). Its pathway is carbohydrate biosynthesis; gluconeogenesis. In Saccharomyces cerevisiae (strain AWRI1631) (Baker's yeast), this protein is L-serine dehydratase (SDL1).